A 727-amino-acid polypeptide reads, in one-letter code: Iron-sulfur clusters transporter ATM1, mitochondrial (727 aa).

Residues 1 to 25 (MLIGGAQNRLYQLRTSNILGLLRTR) constitute a mitochondrion transit peptide. Over 26–138 (SALRVGSKVE…PRGNTKVKVR (113 aa)) the chain is Mitochondrial matrix. Residues 87–107 (KSKLPNEDTAHNASEKNSKKT) form a disordered region. Over residues 90-107 (LPNEDTAHNASEKNSKKT) the composition is skewed to basic and acidic residues. A helical transmembrane segment spans residues 139–160 (VLLALALLIGAKVLNVQVPFFF). An ABC transmembrane type-1 domain is found at 139–429 (VLLALALLIG…LGSVYRELKQ (291 aa)). The Mitochondrial intermembrane portion of the chain corresponds to 161 to 183 (KQIIDGMNVDWSDATVALPAALG). A helical transmembrane segment spans residues 184-207 (LTIMCYGLARFGAVLFGELRNAIF). Residues 208–256 (ARVAQNAIRNVSLQTFEHLMKLDLGWHLSRQTGGLTRAMDRGTKGISYV) are Mitochondrial matrix-facing. Residues 257–280 (LSAMVFHIIPITFEISVVCGILTY) traverse the membrane as a helical segment. Residue Gln281 is a topological domain, mitochondrial intermembrane. A helical membrane pass occupies residues 282–302 (FGASFAGITFTTMLLYSIFTI). The Mitochondrial matrix portion of the chain corresponds to 303 to 368 (RTTAWRTRFR…SQVKVAQSLA (66 aa)). Glutathione contacts are provided by residues 308 to 312 (RTRFR) and 371 to 374 (NSGQ). Residues 369 to 387 (FLNSGQSLIFTTALTGMMY) form a helical membrane-spanning segment. Topologically, residues 388 to 402 (MGCTGVIGGDLTVGD) are mitochondrial intermembrane. Residues 403–424 (LVLINQLVFQLSVPLNFLGSVY) traverse the membrane as a helical segment. Glutathione is bound at residue Gly421. The Mitochondrial matrix segment spans residues 425–727 (RELKQSLIDM…ETLEKLNKSI (303 aa)). The region spanning 465–701 (IKFENVTFGY…ENSLYKELWR (237 aa)) is the ABC transporter domain. ATP is bound by residues Tyr474 and 498–509 (GPSGSGKSTVLK).

Belongs to the ABC transporter superfamily. ABCB family. Heavy Metal importer (TC 3.A.1.210) subfamily. In terms of assembly, homodimer.

Its subcellular location is the mitochondrion inner membrane. Functionally, performs an essential function in the generation of cytoplasmic iron-sulfur proteins by mediating the ATP-dependent export of Fe/S cluster precursors synthesized by NFS1 and other mitochondrial proteins. Hydrolyzes ATP. Binds glutathione and may function by transporting a glutathione-conjugated iron-sulfur compound. The polypeptide is Iron-sulfur clusters transporter ATM1, mitochondrial (Candida glabrata (strain ATCC 2001 / BCRC 20586 / JCM 3761 / NBRC 0622 / NRRL Y-65 / CBS 138) (Yeast)).